A 581-amino-acid chain; its full sequence is Arginine--tRNA ligase (581 aa).

Residues Pro-126–His-136 carry the 'HIGH' region motif.

The protein belongs to the class-I aminoacyl-tRNA synthetase family. As to quaternary structure, monomer.

It is found in the cytoplasm. The catalysed reaction is tRNA(Arg) + L-arginine + ATP = L-arginyl-tRNA(Arg) + AMP + diphosphate. This is Arginine--tRNA ligase from Shewanella halifaxensis (strain HAW-EB4).